The primary structure comprises 546 residues: SusD-like protein BACOVA_02651 (546 aa).

An N-terminal signal peptide occupies residues M1–A21. C22 carries N-palmitoyl cysteine lipidation. C22 carries S-diacylglycerol cysteine lipidation.

It belongs to the SusD family.

The protein localises to the cell outer membrane. It participates in glucan metabolism; xyloglucan degradation. In terms of biological role, polysaccharide-binding protein present at the surface of the cell. Probably mediates xyloglucan-binding before xyloglucan transport in the periplasm for degradation. The protein is SusD-like protein BACOVA_02651 of Bacteroides ovatus (strain ATCC 8483 / DSM 1896 / JCM 5824 / BCRC 10623 / CCUG 4943 / NCTC 11153).